The primary structure comprises 84 residues: Cell division topological specificity factor (84 aa).

It belongs to the MinE family.

In terms of biological role, prevents the cell division inhibition by proteins MinC and MinD at internal division sites while permitting inhibition at polar sites. This ensures cell division at the proper site by restricting the formation of a division septum at the midpoint of the long axis of the cell. The protein is Cell division topological specificity factor of Pseudomonas entomophila (strain L48).